The chain runs to 224 residues: Homeobox protein Hox-B6 (224 aa).

Positions 127–132 match the Antp-type hexapeptide motif; the sequence is VYPWMQ. The segment at residues 146 to 205 is a DNA-binding region (homeobox); it reads GRRGRQTYTRYQTLELEKEFHYNRYLTRRRRIEIAHALCLTERQIKIWFQNRRMKWKKES. Ser-214 carries the post-translational modification Phosphoserine.

It belongs to the Antp homeobox family.

Its subcellular location is the nucleus. Sequence-specific transcription factor which is part of a developmental regulatory system that provides cells with specific positional identities on the anterior-posterior axis. This is Homeobox protein Hox-B6 (HOXB6) from Homo sapiens (Human).